The sequence spans 420 residues: MGKITIAPLTRLEGHGKVTIKLDDSGKPADVKLHITALRGFEQFVIGRPAEEVPRIVPRICGICQTAHHLASVKAVDAAWGAQIPSAAEKQRELMHLGNMIHSHALHFYYLAAPDFVLGPDADPAIRNIVGVIDAAPEVAKKAIAMRRVGQSMVEATGGKPIHPVTGIPGGLSKSMSEEKRDELLAEIDTMIQYGQDGLDLMKSLNEKYLDTINSLGVIDTWYLGLVKDGKHNFYGDTLRFVSPDGSEKMEFKPAEYLDYLGEHVVEHSYVKYPYNKKVGYPEGLYRVGPLAMINVCDSMSTPLAEEARKEFAETFGRPANQSIAYNQARLIELLSACERAKELLEDPEIVSTDVKAEVEPKAGNGVGVVYAPRGTLFHNYETDDNGIVTKANMIVATTHNVPTMEKAIQQAAEVLFKDN.

Positions 61 and 64 each coordinate Ni(2+).

It belongs to the [NiFe]/[NiFeSe] hydrogenase large subunit family. As to quaternary structure, the F420-non-reducing hydrogenase vhu is composed of four subunits; VhuA, VhuD, VhuG and VhuU. The cofactor is Ni(2+).

In Methanococcus voltae, this protein is F420-non-reducing hydrogenase vhu subunit A (vhuA).